The sequence spans 235 residues: MHKTYFIADLHLSETRPNLTALFVDFMQHLAPDADAVYILGDLFDFWIGDDERSPLIDTVKNQIRTLVQQGVPCYFIHGNRDFLLGKRFAGDCGLRLLPEYQVIDLYGEPTLICHGDTLCTDDLHYQAFRRKVHRPWLQWLFRRLPLKVRLKIAQNIRTKSSRDKQNKSQAIMDVNPEFTRRIFERFQVKRLIHGHTHRQNIHQIPPHFERIVLGDWGETASILEVTPQDIRFRQ.

Aspartate 9, histidine 11, aspartate 42, asparagine 80, and histidine 115 together coordinate Mn(2+). 80 to 81 (NR) is a substrate binding site. Aspartate 123, serine 161, lysine 165, lysine 168, and histidine 196 together coordinate substrate. Residues histidine 196 and histidine 198 each contribute to the Mn(2+) site.

It belongs to the LpxH family. It depends on Mn(2+) as a cofactor.

The protein resides in the cell inner membrane. It carries out the reaction UDP-2-N,3-O-bis[(3R)-3-hydroxytetradecanoyl]-alpha-D-glucosamine + H2O = 2-N,3-O-bis[(3R)-3-hydroxytetradecanoyl]-alpha-D-glucosaminyl 1-phosphate + UMP + 2 H(+). It participates in glycolipid biosynthesis; lipid IV(A) biosynthesis; lipid IV(A) from (3R)-3-hydroxytetradecanoyl-[acyl-carrier-protein] and UDP-N-acetyl-alpha-D-glucosamine: step 4/6. Hydrolyzes the pyrophosphate bond of UDP-2,3-diacylglucosamine to yield 2,3-diacylglucosamine 1-phosphate (lipid X) and UMP by catalyzing the attack of water at the alpha-P atom. Involved in the biosynthesis of lipid A, a phosphorylated glycolipid that anchors the lipopolysaccharide to the outer membrane of the cell. This is UDP-2,3-diacylglucosamine hydrolase from Actinobacillus succinogenes (strain ATCC 55618 / DSM 22257 / CCUG 43843 / 130Z).